The sequence spans 244 residues: Venom nerve growth factor 2 (244 aa).

The N-terminal stretch at 1 to 18 (MSMLCYTLIIAFLIGIWA) is a signal peptide. A propeptide spanning residues 19–125 (APKSEDNVPL…TLNRNIRAKR (107 aa)) is cleaved from the precursor. Residues 47–66 (GLKTSRNTDQRHPAPKKAED) are compositionally biased toward basic and acidic residues. The disordered stretch occupies residues 47–69 (GLKTSRNTDQRHPAPKKAEDQEL). Intrachain disulfides connect Cys139-Cys205 and Cys181-Cys233.

Belongs to the NGF-beta family. In terms of assembly, homodimer; non-covalently linked. As to expression, expressed by the venom gland.

Its subcellular location is the secreted. Functionally, nerve growth factor is important for the development and maintenance of the sympathetic and sensory nervous systems. It stimulates division and differentiation of sympathetic and embryonic sensory neurons as well as basal forebrain cholinergic neurons in the brain. Its relevance in the snake venom is not clear. However, it has been shown to inhibit metalloproteinase-dependent proteolysis of platelet glycoprotein Ib alpha, suggesting a metalloproteinase inhibition to prevent metalloprotease autodigestion and/or protection against prey proteases. Binds a lipid between the two protein chains in the homodimer. The lipid-bound form promotes histamine relase from mouse mast cells, contrary to the lipid-free form. This Notechis scutatus scutatus (Mainland tiger snake) protein is Venom nerve growth factor 2.